The primary structure comprises 38 residues: Augerpeptide hhe53 (38 aa).

Contains 2 disulfide bonds. In terms of tissue distribution, expressed by the venom duct.

The protein localises to the secreted. The protein is Augerpeptide hhe53 of Hastula hectica (Sea snail).